Reading from the N-terminus, the 189-residue chain is Bilin-binding protein (189 aa).

An N-terminal signal peptide occupies residues M1–A15. 2 disulfides stabilise this stretch: C23–C130 and C57–C185.

Belongs to the calycin superfamily. Lipocalin family. As to quaternary structure, homotetramer. As to expression, hemolymph.

The protein localises to the secreted. This protein binds the blue pigments bilins. This chain is Bilin-binding protein, found in Pieris brassicae (White butterfly).